A 1179-amino-acid polypeptide reads, in one-letter code: ATP-dependent helicase/deoxyribonuclease subunit B (1179 aa).

It belongs to the helicase family. AddB/RexB type 2 subfamily. Heterodimer of AddA and RexB. It depends on Mg(2+) as a cofactor.

Functionally, the heterodimer acts as both an ATP-dependent DNA helicase and an ATP-dependent, dual-direction single-stranded exonuclease. Recognizes the chi site generating a DNA molecule suitable for the initiation of homologous recombination. This subunit has 5' -&gt; 3' nuclease activity but not helicase activity. This Lacticaseibacillus casei (strain BL23) (Lactobacillus casei) protein is ATP-dependent helicase/deoxyribonuclease subunit B.